Consider the following 1058-residue polypeptide: Lon protease homolog, mitochondrial (1058 aa).

The transit peptide at 1–47 (MLTRIRNAGVGGNAARRVRLLAGYTGARMAHAAALNSTTGAGGAARA) directs the protein to the mitochondrion. Positions 72 to 151 (GGQCILKQDR…RSNPPSEGEV (80 aa)) are disordered. Composition is skewed to basic and acidic residues over residues 78 to 97 (KQDR…RAEE) and 106 to 118 (DEEA…EEQA). The span at 129 to 142 (GSGGSASSAGGGGR) shows a compositional bias: gly residues. One can recognise a Lon N-terminal domain in the interval 158–412 (LMVLPMSNRP…KALVFIKKEV (255 aa)). Residue 564–571 (GPPGVGKT) coordinates ATP. Residues 778 to 814 (TPKSAPAETNIEPENGKPDASAKPLTNNLPAPEPLNI) are disordered. The Lon proteolytic domain occupies 844–1030 (KTPAGVVMGL…DDVFNVLFGS (187 aa)). Catalysis depends on residues S936 and K979.

Belongs to the peptidase S16 family. As to quaternary structure, homohexamer or homoheptamer. Organized in a ring with a central cavity.

The protein localises to the mitochondrion matrix. It carries out the reaction Hydrolysis of proteins in presence of ATP.. In terms of biological role, ATP-dependent serine protease that mediates the selective degradation of misfolded, unassembled or oxidatively damaged polypeptides as well as certain short-lived regulatory proteins in the mitochondrial matrix. May also have a chaperone function in the assembly of inner membrane protein complexes. Participates in the regulation of mitochondrial gene expression and in the maintenance of the integrity of the mitochondrial genome. Binds to mitochondrial DNA in a site-specific manner. This Eremothecium gossypii (strain ATCC 10895 / CBS 109.51 / FGSC 9923 / NRRL Y-1056) (Yeast) protein is Lon protease homolog, mitochondrial.